The primary structure comprises 539 residues: Fusion glycoprotein F0 (539 aa).

Residues methionine 1–cysteine 18 form the signal peptide. Topologically, residues glutamine 19–threonine 493 are extracellular. Residues cysteine 63 and cysteine 192 are joined by a disulfide bond. The fusion peptide stretch occupies residues phenylalanine 110–leucine 134. Residues valine 135 to serine 163 adopt a coiled-coil conformation. N-linked (GlcNAc...) asparagine; by host glycosylation occurs at asparagine 238. Cystine bridges form between cysteine 331–cysteine 340, cysteine 355–cysteine 363, cysteine 387–cysteine 392, and cysteine 394–cysteine 417. N-linked (GlcNAc...) asparagine; by host glycosylation is present at asparagine 359. Asparagine 446 carries N-linked (GlcNAc...) asparagine; by host glycosylation. Residues glutamate 459 to isoleucine 484 are a coiled coil. A helical transmembrane segment spans residues isoleucine 494–isoleucine 514. Topologically, residues alanine 515–lysine 539 are cytoplasmic.

It belongs to the paramyxoviruses fusion glycoprotein family. Homotrimer of disulfide-linked F1-F2. Post-translationally, the inactive precursor F0 is glycosylated and proteolytically cleaved into F1 and F2 to be functionally active. The cleavage is mediated by cellular proteases during the transport and maturation of the polypeptide.

It localises to the virion membrane. The protein resides in the host cell membrane. Its function is as follows. Class I viral fusion protein. Under the current model, the protein has at least 3 conformational states: pre-fusion native state, pre-hairpin intermediate state, and post-fusion hairpin state. During viral and plasma cell membrane fusion, the heptad repeat (HR) regions assume a trimer-of-hairpins structure, positioning the fusion peptide in close proximity to the C-terminal region of the ectodomain. The formation of this structure appears to drive apposition and subsequent fusion of viral and plasma cell membranes. Directs fusion of viral and cellular membranes leading to delivery of the nucleocapsid into the cytoplasm. This fusion is pH independent and occurs directly at the outer cell membrane. The trimer of F1-F2 (F protein) probably interacts with HN at the virion surface. Upon HN binding to its cellular receptor, the hydrophobic fusion peptide is unmasked and interacts with the cellular membrane, inducing the fusion between cell and virion membranes. Later in infection, F proteins expressed at the plasma membrane of infected cells could mediate fusion with adjacent cells to form syncytia, a cytopathic effect that could lead to tissue necrosis. The protein is Fusion glycoprotein F0 (F) of Homo sapiens (Human).